Consider the following 339-residue polypeptide: Anthranilate phosphoribosyltransferase (339 aa).

Residues Gly-78, 81 to 82 (GD), Thr-86, 88 to 91 (NAST), 106 to 114 (KHGNRSVTS), and Ser-118 contribute to the 5-phospho-alpha-D-ribose 1-diphosphate site. Residue Gly-78 participates in anthranilate binding. Ser-90 lines the Mg(2+) pocket. Residue Asn-109 coordinates anthranilate. Arg-164 is an anthranilate binding site. Mg(2+) is bound by residues Asp-225 and Glu-226. The segment covering 248-265 (TVAPEDVGLDRADPKDVA) has biased composition (basic and acidic residues). Residues 248–271 (TVAPEDVGLDRADPKDVAGADPET) form a disordered region.

The protein belongs to the anthranilate phosphoribosyltransferase family. Homodimer. Mg(2+) serves as cofactor.

It carries out the reaction N-(5-phospho-beta-D-ribosyl)anthranilate + diphosphate = 5-phospho-alpha-D-ribose 1-diphosphate + anthranilate. It participates in amino-acid biosynthesis; L-tryptophan biosynthesis; L-tryptophan from chorismate: step 2/5. Catalyzes the transfer of the phosphoribosyl group of 5-phosphorylribose-1-pyrophosphate (PRPP) to anthranilate to yield N-(5'-phosphoribosyl)-anthranilate (PRA). The polypeptide is Anthranilate phosphoribosyltransferase (Methanopyrus kandleri (strain AV19 / DSM 6324 / JCM 9639 / NBRC 100938)).